Reading from the N-terminus, the 371-residue chain is Cytochrome b (371 aa).

A run of 4 helical transmembrane segments spans residues 25-45 (FGSM…FLAI), 69-90 (WTMQ…YIHI), 105-125 (WLSG…GYVL), and 170-190 (FFAL…AHIM). Heme b is bound by residues histidine 75 and histidine 89. Heme b contacts are provided by histidine 174 and histidine 188. Histidine 193 is a binding site for a ubiquinone. The next 4 membrane-spanning stretches (helical) occupy residues 218–238 (NKDM…LSFL), 280–300 (LGGT…PFTH), 312–332 (MTQT…WTAT), and 339–358 (FMFI…FMNP).

The protein belongs to the cytochrome b family. The cytochrome bc1 complex contains 3 respiratory subunits (MT-CYB, CYC1 and UQCRFS1), 2 core proteins (UQCRC1 and UQCRC2) and probably 6 low-molecular weight proteins. Heme b serves as cofactor.

The protein localises to the mitochondrion inner membrane. Functionally, component of the ubiquinol-cytochrome c reductase complex (complex III or cytochrome b-c1 complex) that is part of the mitochondrial respiratory chain. The b-c1 complex mediates electron transfer from ubiquinol to cytochrome c. Contributes to the generation of a proton gradient across the mitochondrial membrane that is then used for ATP synthesis. In Elapsoidea nigra (Usambara garter snake), this protein is Cytochrome b (MT-CYB).